The chain runs to 629 residues: Arginine--tRNA ligase (629 aa).

The 'HIGH' region signature appears at 128–138 (VNPTKPLHMGH).

It belongs to the class-I aminoacyl-tRNA synthetase family.

The protein localises to the cytoplasm. The enzyme catalyses tRNA(Arg) + L-arginine + ATP = L-arginyl-tRNA(Arg) + AMP + diphosphate. This is Arginine--tRNA ligase from Pyrococcus furiosus (strain ATCC 43587 / DSM 3638 / JCM 8422 / Vc1).